Consider the following 401-residue polypeptide: Ascaroside receptor GPR3 (401 aa).

Topologically, residues 1-16 (MQPFGDAWSQRHLAGV) are extracellular. The helical transmembrane segment at 17-37 (VLAGSVLSIVGSLYMILGFFF) threads the bilayer. At 38–47 (LRECRSFRHK) the chain is on the cytoplasmic side. Residues 48-68 (LILGLAVSDLLLALNFFIPSL) form a helical membrane-spanning segment. Residues 69-93 (SMVTGREISSPWNEGFCSANGFLMQ) are Extracellular-facing. Residues C85 and C159 are joined by a disulfide bond. A helical membrane pass occupies residues 94-114 (LFFAQIDVWQISIALITLLML). The Cytoplasmic segment spans residues 115-128 (SGPSMVLKWIRENV). Residues 129–149 (WAVWLFPWLVSLIAAFFAFGF) form a helical membrane-spanning segment. Over 150-175 (WDYANVGGFCWLGSRNIRLYFNYIPR) the chain is Extracellular. The helical transmembrane segment at 176-196 (WIIILVCLVIYIAVYRLILHA) threads the bilayer. Topologically, residues 197 to 294 (RRRANIQKTY…QKQVRKIAIQ (98 aa)) are cytoplasmic. Residues 206-259 (YRGRASDRAPPQPVTTTAPATNPESEKVNPDEISSGNGSSSLDTSRSGSSTGFT) form a disordered region. Residues 239-257 (SSGNGSSSLDTSRSGSSTG) show a composition bias toward low complexity. A helical transmembrane segment spans residues 295-315 (MISYPLAYAVLWAIPTIVMII). Over 316 to 321 (QVARGG) the chain is Extracellular. The chain crosses the membrane as a helical span at residues 322–342 (EGVSIHVEGLAKMLLVFNGFV). At 343–401 (DAHVYGFNERTAMGWRQRIRPAAQEDDEEAAGTSGGVHEVVSRPEPTLKNPNVWQQNMV) the chain is on the cytoplasmic side. The disordered stretch occupies residues 362–401 (RPAAQEDDEEAAGTSGGVHEVVSRPEPTLKNPNVWQQNMV). A compositionally biased stretch (polar residues) spans 391-401 (KNPNVWQQNMV).

It belongs to the G-protein coupled receptor 1 family. Interacts with ascaroside receptor GPR2; may form a functional heterodimer. Interacts with guanine nucleotide-binding protein alpha GPA2; to activate adenylate cyclase and positively regulate nematode trap formation.

Its subcellular location is the cell membrane. Its function is as follows. G protein-coupled receptor that senses nematode ascaroside pheromones and signals via adenylate cyclase to positively regulate trap formation for nematode capture. The sequence is that of Ascaroside receptor GPR3 from Arthrobotrys oligospora (strain ATCC 24927 / CBS 115.81 / DSM 1491) (Nematode-trapping fungus).